A 299-amino-acid chain; its full sequence is 4-diphosphocytidyl-2-C-methyl-D-erythritol kinase (299 aa).

Lys-16 is an active-site residue. 97 to 107 is an ATP binding site; that stretch reads PVASGIGGGSA. The active site involves Asp-140.

It belongs to the GHMP kinase family. IspE subfamily.

The enzyme catalyses 4-CDP-2-C-methyl-D-erythritol + ATP = 4-CDP-2-C-methyl-D-erythritol 2-phosphate + ADP + H(+). It participates in isoprenoid biosynthesis; isopentenyl diphosphate biosynthesis via DXP pathway; isopentenyl diphosphate from 1-deoxy-D-xylulose 5-phosphate: step 3/6. In terms of biological role, catalyzes the phosphorylation of the position 2 hydroxy group of 4-diphosphocytidyl-2C-methyl-D-erythritol. The protein is 4-diphosphocytidyl-2-C-methyl-D-erythritol kinase of Roseobacter denitrificans (strain ATCC 33942 / OCh 114) (Erythrobacter sp. (strain OCh 114)).